A 28-amino-acid polypeptide reads, in one-letter code: Heat shock protein 81 (28 aa).

2 residues coordinate ATP: Asn-5 and Asp-21.

It belongs to the heat shock protein 90 family. In terms of assembly, homodimer.

It localises to the cytoplasm. Functionally, putative molecular chaperone that may promote the maturation, structural maintenance and proper regulation of specific target proteins. This chain is Heat shock protein 81, found in Pseudotsuga menziesii (Douglas-fir).